The chain runs to 505 residues: Aspartyl/glutamyl-tRNA(Asn/Gln) amidotransferase subunit B (505 aa).

It belongs to the GatB/GatE family. GatB subfamily. Heterotrimer of A, B and C subunits.

It carries out the reaction L-glutamyl-tRNA(Gln) + L-glutamine + ATP + H2O = L-glutaminyl-tRNA(Gln) + L-glutamate + ADP + phosphate + H(+). The enzyme catalyses L-aspartyl-tRNA(Asn) + L-glutamine + ATP + H2O = L-asparaginyl-tRNA(Asn) + L-glutamate + ADP + phosphate + 2 H(+). Its function is as follows. Allows the formation of correctly charged Asn-tRNA(Asn) or Gln-tRNA(Gln) through the transamidation of misacylated Asp-tRNA(Asn) or Glu-tRNA(Gln) in organisms which lack either or both of asparaginyl-tRNA or glutaminyl-tRNA synthetases. The reaction takes place in the presence of glutamine and ATP through an activated phospho-Asp-tRNA(Asn) or phospho-Glu-tRNA(Gln). This Dinoroseobacter shibae (strain DSM 16493 / NCIMB 14021 / DFL 12) protein is Aspartyl/glutamyl-tRNA(Asn/Gln) amidotransferase subunit B.